The chain runs to 550 residues: Chaperonin GroEL (550 aa).

ATP is bound by residues threonine 29 to proline 32, lysine 50, aspartate 86 to threonine 90, glycine 417, and aspartate 499.

It belongs to the chaperonin (HSP60) family. Forms a cylinder of 14 subunits composed of two heptameric rings stacked back-to-back. Interacts with the co-chaperonin GroES.

Its subcellular location is the cytoplasm. It carries out the reaction ATP + H2O + a folded polypeptide = ADP + phosphate + an unfolded polypeptide.. Together with its co-chaperonin GroES, plays an essential role in assisting protein folding. The GroEL-GroES system forms a nano-cage that allows encapsulation of the non-native substrate proteins and provides a physical environment optimized to promote and accelerate protein folding. The polypeptide is Chaperonin GroEL (Ehrlichia chaffeensis).